The following is a 445-amino-acid chain: Sensor protein kinase CarS (445 aa).

Residues 1–24 (MRSIQRRLSVGLFAVLLVVGLVLA) form the signal peptide. The helical transmembrane segment at 150 to 170 (FARVQWMGLGAGALALLLVLL) threads the bilayer. The HAMP domain maps to 177–228 (RRSLRPLEEVRLQIAQLQQGQRSQLDNQAPEELEPLVEQINHLLAHTEETLK). The Histidine kinase domain maps to 236-438 (NLGHALKTPL…RVSVELPLQK (203 aa)). Residue His-239 is modified to Phosphohistidine; by autocatalysis.

It is found in the membrane. It catalyses the reaction ATP + protein L-histidine = ADP + protein N-phospho-L-histidine.. In terms of biological role, member of the two-component regulatory system CarS/CarR that regulates the expression of multiple genes involved in calcium signaling and homeostasis including CarO and CarP. May function as a membrane-associated protein kinase that phosphorylates CarR in response to environmental signals leading to activation of specific gene promoters. The chain is Sensor protein kinase CarS (carS) from Pseudomonas aeruginosa (strain ATCC 15692 / DSM 22644 / CIP 104116 / JCM 14847 / LMG 12228 / 1C / PRS 101 / PAO1).